The primary structure comprises 209 residues: MAVLSEDVLLYLKEKNIPMLFEQIVQNIISDAPERPMSYIGDLMRRGIPLQIFIAGPAGSGKRTQCKNIADRLGVVLISSGQVLTRGVESGSETSQLAHSYVSRGERVPDTLVSMIMKDRLSQSDACEKGWLVEGYPRNAQQAQAVEECGVIPQVFILLDLPEDLSFRRLEHRRYDPATNKXYHMLDNPPPGGRCRVMRTAPAEGCKFP.

Position 59–64 (59–64 (GSGKRT)) interacts with ATP. An NMP region spans residues 79–108 (SSGQVLTRGVESGSETSQLAHSYVSRGERV). AMP contacts are provided by residues S80, 106–108 (ERV), 135–138 (GYPR), and Q142. Positions 172 to 205 (HRRYDPATNKXYHMLDNPPPGGRCRVMRTAPAEG) are LID. R173 is an ATP binding site.

Belongs to the adenylate kinase family. As to quaternary structure, monomer.

It localises to the cytoplasm. The catalysed reaction is AMP + ATP = 2 ADP. Catalyzes the reversible transfer of the terminal phosphate group between ATP and AMP. Plays an important role in cellular energy homeostasis and in adenine nucleotide metabolism. This is Adenylate kinase from Trypanosoma brucei rhodesiense.